The primary structure comprises 354 residues: Glutamine synthetase (354 aa).

Residues 22–101 form the GS beta-grasp domain; it reads FHAEYVWIDG…VLSETYNNDG (80 aa). The 247-residue stretch at 108 to 354 folds into the GS catalytic domain; it reads HRHHTAKVME…IIIETTILDK (247 aa).

The protein belongs to the glutamine synthetase family. Homooctamer.

The protein resides in the cytoplasm. It carries out the reaction L-glutamate + NH4(+) + ATP = L-glutamine + ADP + phosphate + H(+). This chain is Glutamine synthetase (GLN1), found in Amanita muscaria (Fly agaric).